The following is a 369-amino-acid chain: Transcription initiation factor IIA large subunit (369 aa).

2 stretches are compositionally biased toward polar residues: residues 113 to 210 (HGNS…QNSP) and 218 to 233 (TESS…NDVP). Positions 113–248 (HGNSNYYSPP…IHDLDDAGSP (136 aa)) are disordered. The residue at position 249 (Ser249) is a Phosphoserine. Residues 282-319 (IEDNEDEKKPPVDTPSDEAINSDLDDPDSDEAPETEEG) are disordered. Over residues 304-319 (DLDDPDSDEAPETEEG) the composition is skewed to acidic residues.

Belongs to the TFIIA subunit 1 family. In terms of assembly, TFIIA is a heterodimer of the large subunit and the small subunit gamma.

The protein resides in the nucleus. Functionally, TFIIA is a component of the transcription machinery of RNA polymerase II and plays an important role in transcriptional activation. TFIIA in a complex with tbp mediates transcriptional activity. The protein is Transcription initiation factor IIA large subunit of Schizosaccharomyces pombe (strain 972 / ATCC 24843) (Fission yeast).